Consider the following 406-residue polypeptide: Bifunctional enzyme IspD/IspF (406 aa).

Residues 1 to 247 (MSLIRVNGEA…AFFFNPAKDT (247 aa)) are 2-C-methyl-D-erythritol 4-phosphate cytidylyltransferase. The segment at 248-406 (FIGMGFDTHA…HVSMRYKQKL (159 aa)) is 2-C-methyl-D-erythritol 2,4-cyclodiphosphate synthase. A divalent metal cation contacts are provided by D254 and H256. 4-CDP-2-C-methyl-D-erythritol 2-phosphate contacts are provided by residues 254-256 (DTH) and 280-281 (HS). A divalent metal cation is bound at residue H288. 4-CDP-2-C-methyl-D-erythritol 2-phosphate contacts are provided by residues 302–304 (DIG), 307–311 (FPDND), 378–381 (TTME), F385, and K388.

This sequence in the N-terminal section; belongs to the IspD/TarI cytidylyltransferase family. IspD subfamily. The protein in the C-terminal section; belongs to the IspF family. It depends on a divalent metal cation as a cofactor.

The catalysed reaction is 2-C-methyl-D-erythritol 4-phosphate + CTP + H(+) = 4-CDP-2-C-methyl-D-erythritol + diphosphate. The enzyme catalyses 4-CDP-2-C-methyl-D-erythritol 2-phosphate = 2-C-methyl-D-erythritol 2,4-cyclic diphosphate + CMP. It functions in the pathway isoprenoid biosynthesis; isopentenyl diphosphate biosynthesis via DXP pathway; isopentenyl diphosphate from 1-deoxy-D-xylulose 5-phosphate: step 2/6. It participates in isoprenoid biosynthesis; isopentenyl diphosphate biosynthesis via DXP pathway; isopentenyl diphosphate from 1-deoxy-D-xylulose 5-phosphate: step 4/6. Functionally, bifunctional enzyme that catalyzes the formation of 4-diphosphocytidyl-2-C-methyl-D-erythritol from CTP and 2-C-methyl-D-erythritol 4-phosphate (MEP) (IspD), and catalyzes the conversion of 4-diphosphocytidyl-2-C-methyl-D-erythritol 2-phosphate (CDP-ME2P) to 2-C-methyl-D-erythritol 2,4-cyclodiphosphate (ME-CPP) with a corresponding release of cytidine 5-monophosphate (CMP) (IspF). This Helicobacter pylori (strain HPAG1) protein is Bifunctional enzyme IspD/IspF.